We begin with the raw amino-acid sequence, 331 residues long: Large ribosomal subunit protein uL3 (331 aa).

It belongs to the universal ribosomal protein uL3 family. As to quaternary structure, part of the 50S ribosomal subunit. Forms a cluster with proteins L14 and L24e.

Its function is as follows. One of the primary rRNA binding proteins, it binds directly near the 3'-end of the 23S rRNA, where it nucleates assembly of the 50S subunit. The chain is Large ribosomal subunit protein uL3 from Archaeoglobus fulgidus (strain ATCC 49558 / DSM 4304 / JCM 9628 / NBRC 100126 / VC-16).